The sequence spans 919 residues: Transcriptional regulatory protein EDS1 (919 aa).

Residues 1–54 (MSHHVPNLYGTPIRDPHERKRNSASMGEVNQSVSSRNCERGSEKGTKQRKKASR) are disordered. Residues 23–36 (SASMGEVNQSVSSR) are compositionally biased toward polar residues. A compositionally biased stretch (basic and acidic residues) spans 37 to 46 (NCERGSEKGT). Positions 56 to 85 (CDQCRRKRIKCRFDKHTGVCQGCLEVGEKC) form a DNA-binding region, zn(2)-C6 fungal-type. A disordered region spans residues 297–338 (AGCPNKKLGTDGRSDKWDKNSTWKPVYRSSNPSHPSTEKNVS). The span at 304 to 317 (LGTDGRSDKWDKNS) shows a compositional bias: basic and acidic residues. Positions 318–338 (TWKPVYRSSNPSHPSTEKNVS) are enriched in polar residues.

Binds DNA in a sequence-specific manner.

It localises to the nucleus. In Saccharomyces cerevisiae (strain RM11-1a) (Baker's yeast), this protein is Transcriptional regulatory protein EDS1 (EDS1).